We begin with the raw amino-acid sequence, 202 residues long: Large ribosomal subunit protein bL25 (202 aa).

Belongs to the bacterial ribosomal protein bL25 family. CTC subfamily. In terms of assembly, part of the 50S ribosomal subunit; part of the 5S rRNA/L5/L18/L25 subcomplex. Contacts the 5S rRNA. Binds to the 5S rRNA independently of L5 and L18.

Functionally, this is one of the proteins that binds to the 5S RNA in the ribosome where it forms part of the central protuberance. This is Large ribosomal subunit protein bL25 from Nitrosomonas eutropha (strain DSM 101675 / C91 / Nm57).